The chain runs to 583 residues: Protein FMP25, mitochondrial (583 aa).

The transit peptide at 1–25 (MSFRLFTRTSQRLPRLNWVSPIRRY) directs the protein to the mitochondrion. A helical membrane pass occupies residues 83–105 (AVGQGILILVVVGGLGTAYLRWP). 4 RCC1 repeats span residues 332-389 (KGQF…AIDK), 390-452 (TGEI…VTIR), 459-510 (DHHY…TETE), and 512-569 (ENEV…KEQR).

Its subcellular location is the mitochondrion membrane. The sequence is that of Protein FMP25, mitochondrial (FMP25) from Saccharomyces cerevisiae (strain ATCC 204508 / S288c) (Baker's yeast).